Here is a 133-residue protein sequence, read N- to C-terminus: Arginine decarboxylase proenzyme (133 aa).

Ser-81 acts as the Schiff-base intermediate with substrate; via pyruvic acid in catalysis. Ser-81 carries the post-translational modification Pyruvic acid (Ser); by autocatalysis. The active-site Proton acceptor; for processing activity is the His-86. Cys-101 acts as the Proton donor; for catalytic activity in catalysis.

Belongs to the prokaryotic AdoMetDC family. Type 1 subfamily. As to quaternary structure, heterooctamer of four alpha and four beta chains arranged as a tetramer of alpha/beta heterodimers. Pyruvate serves as cofactor. In terms of processing, is synthesized initially as an inactive proenzyme. Formation of the active enzyme involves a self-maturation process in which the active site pyruvoyl group is generated from an internal serine residue via an autocatalytic post-translational modification. Two non-identical subunits are generated from the proenzyme in this reaction, and the pyruvate is formed at the N-terminus of the alpha chain, which is derived from the carboxyl end of the proenzyme. The post-translation cleavage follows an unusual pathway, termed non-hydrolytic serinolysis, in which the side chain hydroxyl group of the serine supplies its oxygen atom to form the C-terminus of the beta chain, while the remainder of the serine residue undergoes an oxidative deamination to produce ammonia and the pyruvoyl group blocking the N-terminus of the alpha chain.

The catalysed reaction is L-arginine + H(+) = agmatine + CO2. Its pathway is amine and polyamine biosynthesis; agmatine biosynthesis; agmatine from L-arginine: step 1/1. In terms of biological role, specifically catalyzes the decarboxylation of L-arginine to agmatine. Has no S-adenosylmethionine decarboxylase (AdoMetDC) activity. The sequence is that of Arginine decarboxylase proenzyme from Pyrobaculum arsenaticum (strain DSM 13514 / JCM 11321 / PZ6).